The primary structure comprises 120 residues: MESQAKVKISDKAEGIIERDVQNAVIGRREISLKVYHMGSGTPSRKDIIKAIIQAFASQENLVVVRKISTSYGAGISNIKLHIYKSREILEKIEPKYLLDRDAGTKQKKGGSKGGQGAKG.

The interval 101 to 120 is disordered; that stretch reads RDAGTKQKKGGSKGGQGAKG.

It belongs to the eukaryotic ribosomal protein eS24 family.

This Saccharolobus islandicus (strain Y.N.15.51 / Yellowstone #2) (Sulfolobus islandicus) protein is Small ribosomal subunit protein eS24.